The chain runs to 325 residues: Tartrate-resistant acid phosphatase type 5 (325 aa).

An N-terminal signal peptide occupies residues 1–21 (MDMWTALLILQALLLPSLADG). Residues aspartate 33, aspartate 71, tyrosine 74, and asparagine 110 each contribute to the Fe cation site. 2 N-linked (GlcNAc...) asparagine glycosylation sites follow: asparagine 116 and asparagine 147. Cysteine 161 and cysteine 219 form a disulfide bridge. Residues histidine 205, histidine 240, and histidine 242 each contribute to the Fe cation site.

The protein belongs to the metallophosphoesterase superfamily. Purple acid phosphatase family. As to quaternary structure, exists either as monomer or, after proteolytic processing, as a dimer of two chains linked by disulfide bond(s). Fe cation is required as a cofactor.

It localises to the lysosome. It carries out the reaction a phosphate monoester + H2O = an alcohol + phosphate. Functionally, involved in osteopontin/bone sialoprotein dephosphorylation. Its expression seems to increase in certain pathological states such as Gaucher and Hodgkin diseases, the hairy cell, the B-cell, and the T-cell leukemias. The protein is Tartrate-resistant acid phosphatase type 5 (ACP5) of Homo sapiens (Human).